A 321-amino-acid polypeptide reads, in one-letter code: Glucokinase (321 aa).

8–13 (GDVGGT) provides a ligand contact to ATP.

This sequence belongs to the bacterial glucokinase family.

The protein localises to the cytoplasm. The enzyme catalyses D-glucose + ATP = D-glucose 6-phosphate + ADP + H(+). The chain is Glucokinase from Shigella flexneri serotype 5b (strain 8401).